The following is a 291-amino-acid chain: Probable cell wall amidase LytH (291 aa).

A signal peptide spans 1–40 (MKKIDSWLTKHGLKNRLTLVVIVIFIIFLILLFMFVNLSD). Residues 41–105 (EDTGQITITE…WVAGWHTNLN (65 aa)) enclose the SH3b domain. The 165-residue stretch at 122 to 286 (IVLDPGHGGS…VEQAIVDGLK (165 aa)) folds into the MurNAc-LAA domain. The tract at residues 123-147 (VLDPGHGGSDQGASSSTPSKSLEKN) is disordered. The span at 133–142 (QGASSSTPSK) shows a compositional bias: polar residues.

This sequence belongs to the N-acetylmuramoyl-L-alanine amidase 3 family.

Its subcellular location is the secreted. In terms of biological role, probably involved in cell-wall metabolism. This Staphylococcus epidermidis (strain ATCC 35984 / DSM 28319 / BCRC 17069 / CCUG 31568 / BM 3577 / RP62A) protein is Probable cell wall amidase LytH (lytH).